Reading from the N-terminus, the 866-residue chain is Retinoblastoma-related protein 2 (866 aa).

Positions 274-475 are domain A; it reads TPITSAMTTA…EKGSSLYNSL (202 aa). The tract at residues 274 to 721 is pocket; sequence TPITSAMTTA…NEVFVPAAKP (448 aa). The spacer stretch occupies residues 476–593; it reads IVARPSVASE…PVGGNEKCAD (118 aa). The tract at residues 513 to 551 is disordered; it reads LPATPSKKRAAGRDDNADPRSPKRPCNESRSPVVEHNLQ. The span at 523–539 shows a compositional bias: basic and acidic residues; the sequence is AGRDDNADPRSPKRPCN. The tract at residues 594-721 is domain B; it reads VTIQIFFSKI…NEVFVPAAKP (128 aa). 2 disordered regions span residues 731–754 and 839–866; these read TRPEDKKNASGQVPGSPKLSPFPN and SLGQPNGGSTSLDPAAAFSPLSKRKPDT. Over residues 841-850 the composition is skewed to polar residues; sequence GQPNGGSTSL.

The protein belongs to the retinoblastoma protein (RB) family. In terms of tissue distribution, ubiquitous.

The protein resides in the nucleus. Its function is as follows. Regulator of biological processes that recruits a histone deacetylase to control gene transcription. May play a role in the entry into mitosis, negatively regulating the cell proliferation. Formation of stable complexes with geminiviridae replication-associated proteins may create a cellular environment which favors viral DNA replication. This chain is Retinoblastoma-related protein 2 (RBR2), found in Zea mays (Maize).